We begin with the raw amino-acid sequence, 205 residues long: High frequency lysogenization protein HflD homolog (205 aa).

It belongs to the HflD family.

It is found in the cytoplasm. The protein resides in the cell inner membrane. The polypeptide is High frequency lysogenization protein HflD homolog (Shewanella sp. (strain MR-7)).